Here is a 254-residue protein sequence, read N- to C-terminus: Putative hydro-lyase SACE_1553 (254 aa).

The protein belongs to the D-glutamate cyclase family.

In Saccharopolyspora erythraea (strain ATCC 11635 / DSM 40517 / JCM 4748 / NBRC 13426 / NCIMB 8594 / NRRL 2338), this protein is Putative hydro-lyase SACE_1553.